The primary structure comprises 142 residues: Large ribosomal subunit protein uL13 (142 aa).

It belongs to the universal ribosomal protein uL13 family. Part of the 50S ribosomal subunit.

In terms of biological role, this protein is one of the early assembly proteins of the 50S ribosomal subunit, although it is not seen to bind rRNA by itself. It is important during the early stages of 50S assembly. This chain is Large ribosomal subunit protein uL13, found in Helicobacter hepaticus (strain ATCC 51449 / 3B1).